We begin with the raw amino-acid sequence, 223 residues long: Phosphoribosylformylglycinamidine synthase subunit PurQ (223 aa).

One can recognise a Glutamine amidotransferase type-1 domain in the interval 3 to 223; it reads FAVLVFPGSN…MVKSWREQHV (221 aa). Cys85 functions as the Nucleophile in the catalytic mechanism. Catalysis depends on residues His193 and Glu195.

In terms of assembly, part of the FGAM synthase complex composed of 1 PurL, 1 PurQ and 2 PurS subunits.

The protein resides in the cytoplasm. The catalysed reaction is N(2)-formyl-N(1)-(5-phospho-beta-D-ribosyl)glycinamide + L-glutamine + ATP + H2O = 2-formamido-N(1)-(5-O-phospho-beta-D-ribosyl)acetamidine + L-glutamate + ADP + phosphate + H(+). It carries out the reaction L-glutamine + H2O = L-glutamate + NH4(+). The protein operates within purine metabolism; IMP biosynthesis via de novo pathway; 5-amino-1-(5-phospho-D-ribosyl)imidazole from N(2)-formyl-N(1)-(5-phospho-D-ribosyl)glycinamide: step 1/2. Its function is as follows. Part of the phosphoribosylformylglycinamidine synthase complex involved in the purines biosynthetic pathway. Catalyzes the ATP-dependent conversion of formylglycinamide ribonucleotide (FGAR) and glutamine to yield formylglycinamidine ribonucleotide (FGAM) and glutamate. The FGAM synthase complex is composed of three subunits. PurQ produces an ammonia molecule by converting glutamine to glutamate. PurL transfers the ammonia molecule to FGAR to form FGAM in an ATP-dependent manner. PurS interacts with PurQ and PurL and is thought to assist in the transfer of the ammonia molecule from PurQ to PurL. This is Phosphoribosylformylglycinamidine synthase subunit PurQ from Staphylococcus aureus (strain MRSA252).